Reading from the N-terminus, the 1058-residue chain is Carbamoyl phosphate synthase large chain (1058 aa).

Positions Met1–Glu401 are carboxyphosphate synthetic domain. Residues Arg129, Arg169, Gly175, Gly176, Arg208, Ile210, Glu215, Gly241, Ile242, His243, Gln284, and Glu298 each contribute to the ATP site. The ATP-grasp 1 domain maps to Lys133–Val327. Gln284, Glu298, and Asn300 together coordinate Mg(2+). Mn(2+) is bound by residues Gln284, Glu298, and Asn300. The interval Ile402–Ser546 is oligomerization domain. The tract at residues Val547–Asn929 is carbamoyl phosphate synthetic domain. The 191-residue stretch at Glu671–Leu861 folds into the ATP-grasp 2 domain. 10 residues coordinate ATP: Arg707, Ser746, Ile748, Glu752, Gly777, Val778, His779, Ser780, Gln820, and Glu832. Residues Gln820, Glu832, and Asn834 each contribute to the Mg(2+) site. Mn(2+)-binding residues include Gln820, Glu832, and Asn834. The region spanning Ser930 to Ile1058 is the MGS-like domain. The interval Ser930 to Ile1058 is allosteric domain.

It belongs to the CarB family. As to quaternary structure, composed of two chains; the small (or glutamine) chain promotes the hydrolysis of glutamine to ammonia, which is used by the large (or ammonia) chain to synthesize carbamoyl phosphate. Tetramer of heterodimers (alpha,beta)4. The cofactor is Mg(2+). Mn(2+) serves as cofactor.

The enzyme catalyses hydrogencarbonate + L-glutamine + 2 ATP + H2O = carbamoyl phosphate + L-glutamate + 2 ADP + phosphate + 2 H(+). It carries out the reaction hydrogencarbonate + NH4(+) + 2 ATP = carbamoyl phosphate + 2 ADP + phosphate + 2 H(+). It functions in the pathway amino-acid biosynthesis; L-arginine biosynthesis; carbamoyl phosphate from bicarbonate: step 1/1. The protein operates within pyrimidine metabolism; UMP biosynthesis via de novo pathway; (S)-dihydroorotate from bicarbonate: step 1/3. Large subunit of the glutamine-dependent carbamoyl phosphate synthetase (CPSase). CPSase catalyzes the formation of carbamoyl phosphate from the ammonia moiety of glutamine, carbonate, and phosphate donated by ATP, constituting the first step of 2 biosynthetic pathways, one leading to arginine and/or urea and the other to pyrimidine nucleotides. The large subunit (synthetase) binds the substrates ammonia (free or transferred from glutamine from the small subunit), hydrogencarbonate and ATP and carries out an ATP-coupled ligase reaction, activating hydrogencarbonate by forming carboxy phosphate which reacts with ammonia to form carbamoyl phosphate. In Streptococcus pyogenes serotype M1, this protein is Carbamoyl phosphate synthase large chain.